Here is a 1100-residue protein sequence, read N- to C-terminus: Conjugal transfer protein TraA (1100 aa).

Residue 404–411 (GRAGAGKT) participates in ATP binding.

Belongs to the MobA/MobL family.

This Rhizobium radiobacter (Agrobacterium tumefaciens) protein is Conjugal transfer protein TraA (traA).